Here is a 317-residue protein sequence, read N- to C-terminus: Transaldolase (317 aa).

K126 functions as the Schiff-base intermediate with substrate in the catalytic mechanism.

The protein belongs to the transaldolase family. Type 1 subfamily. In terms of assembly, homodimer.

The protein localises to the cytoplasm. The enzyme catalyses D-sedoheptulose 7-phosphate + D-glyceraldehyde 3-phosphate = D-erythrose 4-phosphate + beta-D-fructose 6-phosphate. Its pathway is carbohydrate degradation; pentose phosphate pathway; D-glyceraldehyde 3-phosphate and beta-D-fructose 6-phosphate from D-ribose 5-phosphate and D-xylulose 5-phosphate (non-oxidative stage): step 2/3. Transaldolase is important for the balance of metabolites in the pentose-phosphate pathway. The polypeptide is Transaldolase (Burkholderia vietnamiensis (strain G4 / LMG 22486) (Burkholderia cepacia (strain R1808))).